Consider the following 297-residue polypeptide: Phosphatidylinositol N-acetylglucosaminyltransferase subunit C (297 aa).

4 helical membrane-spanning segments follow: residues 67–87 (VFVV…WLFG), 88–108 (TGLA…GGDG), 153–173 (AVFM…AAIV), and 239–259 (AFGG…LLLF).

It belongs to the PIGC family. As to quaternary structure, component of the glycosylphosphatidylinositol-N-acetylglucosaminyltransferase (GPI-GnT) complex composed at least by PIGA, PIGC, PIGH, PIGP, PIGQ, PIGY and DPM2. Interacts with PIGQ. Interacts with the heterodimer PIGA:PIGH.

The protein resides in the endoplasmic reticulum membrane. The protein operates within glycolipid biosynthesis; glycosylphosphatidylinositol-anchor biosynthesis. Part of the glycosylphosphatidylinositol-N-acetylglucosaminyltransferase (GPI-GnT) complex that catalyzes the transfer of N-acetylglucosamine from UDP-N-acetylglucosamine to phosphatidylinositol and participates in the first step of GPI biosynthesis. This Mus musculus (Mouse) protein is Phosphatidylinositol N-acetylglucosaminyltransferase subunit C.